Reading from the N-terminus, the 444-residue chain is Homocysteine/cysteine synthase (444 aa).

Serine 44 is modified (phosphoserine). A Glycyl lysine isopeptide (Lys-Gly) (interchain with G-Cter in ubiquitin) cross-link involves residue lysine 160. Lysine 209 is subject to N6-(pyridoxal phosphate)lysine.

It belongs to the trans-sulfuration enzymes family. Homotetramer. Pyridoxal 5'-phosphate serves as cofactor.

It localises to the cytoplasm. It carries out the reaction O-acetyl-L-homoserine + methanethiol = L-methionine + acetate + H(+). The enzyme catalyses O-acetyl-L-homoserine + hydrogen sulfide = L-homocysteine + acetate. The catalysed reaction is O-acetyl-L-serine + hydrogen sulfide = L-cysteine + acetate. The protein operates within amino-acid biosynthesis; L-methionine biosynthesis via de novo pathway; L-homocysteine from O-acetyl-L-homoserine. Its function is as follows. Catalyzes the conversion of O-acetyl-L-homoserine (OAH) into homocysteine in the methionine biosynthesis pathway. Required to efficiently reduce toxic levels of hydrogen sulfide generated when the sulfate assimilation pathway (SAP) is active. Also catalyzes the conversion of O-acetylserine (OAS) into cysteine, the last step in the cysteine biosynthesis pathway. However, it seems that in S.cerevisiae cysteine biosynthesis occurs exclusively through the cystathionine pathway and not via direct incorporation of sulfur into OAS. It therefore has no metabolic role in cysteine biosynthesis and may only have a regulatory role controlling OAS levels. The chain is Homocysteine/cysteine synthase from Saccharomyces cerevisiae (strain ATCC 204508 / S288c) (Baker's yeast).